A 284-amino-acid polypeptide reads, in one-letter code: Acetylglutamate kinase (284 aa).

Substrate-binding positions include 66 to 67 (GG), Arg-88, and Asn-179.

This sequence belongs to the acetylglutamate kinase family. ArgB subfamily.

It is found in the cytoplasm. The catalysed reaction is N-acetyl-L-glutamate + ATP = N-acetyl-L-glutamyl 5-phosphate + ADP. It participates in amino-acid biosynthesis; L-arginine biosynthesis; N(2)-acetyl-L-ornithine from L-glutamate: step 2/4. In terms of biological role, catalyzes the ATP-dependent phosphorylation of N-acetyl-L-glutamate. This chain is Acetylglutamate kinase, found in Actinobacillus pleuropneumoniae serotype 7 (strain AP76).